Reading from the N-terminus, the 664-residue chain is Intraflagellar transport protein 70A2 (664 aa).

TPR repeat units lie at residues 11-44 (DGEF…SPRS), 45-78 (RAGL…HPEL), 153-186 (PDGL…SGYQ), 188-220 (DVSY…GIRQ), 395-423 (QVQE…EKYI), 424-456 (PVLM…CNDH), and 458-491 (VWKL…NYDN). Residues 507–534 (YIMTSQNEEAEELMRKIEKEEEQLSYGD) are a coiled coil. Residues 543–576 (CIVNLVIGTLYCAKGNYDFGISRVIKSLEPYHKK) form a TPR 8 repeat.

The protein belongs to the TTC30/dfy-1/fleer family. Interacts wit the IFT B complex component IFT52.

The protein resides in the cell projection. It is found in the cilium. In terms of biological role, required for polyglutamylation of axonemal tubulin. Plays a role in anterograde intraflagellar transport (IFT), the process by which cilia precursors are transported from the base of the cilium to the site of their incorporation at the tip. The protein is Intraflagellar transport protein 70A2 (Ift70a2) of Rattus norvegicus (Rat).